The chain runs to 356 residues: Hyaluronan and proteoglycan link protein 1 (356 aa).

Positions 1–9 (MRSLLLLVL) are excised as a propeptide. Positions 40-154 (PRLLVEAEQA…EGLEDDTAVV (115 aa)) constitute an Ig-like V-type domain. N-linked (GlcNAc...) asparagine glycosylation is present at Asn58. Cystine bridges form between Cys63–Cys141, Cys183–Cys254, Cys207–Cys228, Cys281–Cys351, and Cys306–Cys327. Link domains lie at 161-256 (VVFP…FCFT) and 261-353 (GRFY…YCFR).

This sequence belongs to the HAPLN family. In terms of tissue distribution, ubiquitously expressed.

It is found in the secreted. The protein localises to the extracellular space. The protein resides in the extracellular matrix. In terms of biological role, stabilizes the aggregates of proteoglycan monomers with hyaluronic acid in the extracellular cartilage matrix. This chain is Hyaluronan and proteoglycan link protein 1 (Hapln1), found in Mus musculus (Mouse).